We begin with the raw amino-acid sequence, 157 residues long: Transcriptional regulator MraZ (157 aa).

SpoVT-AbrB domains follow at residues 7 to 54 and 83 to 126; these read TYTM…GTSL and TEML…EPER.

It belongs to the MraZ family. In terms of assembly, forms oligomers.

Its subcellular location is the cytoplasm. It is found in the nucleoid. The protein is Transcriptional regulator MraZ of Azorhizobium caulinodans (strain ATCC 43989 / DSM 5975 / JCM 20966 / LMG 6465 / NBRC 14845 / NCIMB 13405 / ORS 571).